A 375-amino-acid chain; its full sequence is Growth/differentiation factor 8 (375 aa).

An N-terminal signal peptide occupies residues 1–23 (MQKLAVYVYIYLFMQIAVDPVAL). Positions 24–266 (DGSSQPTENA…VTDTPKRSRR (243 aa)) are excised as a propeptide. Asn-71 carries an N-linked (GlcNAc...) asparagine glycan. Cystine bridges form between Cys-272/Cys-282, Cys-281/Cys-340, Cys-309/Cys-372, and Cys-313/Cys-374.

The protein belongs to the TGF-beta family. As to quaternary structure, homodimer; disulfide-linked.

The protein resides in the secreted. Functionally, acts specifically as a negative regulator of skeletal muscle growth. The chain is Growth/differentiation factor 8 (MSTN) from Gallus gallus (Chicken).